A 163-amino-acid chain; its full sequence is Early nodulin-like protein 20 (163 aa).

The first 25 residues, 1 to 25, serve as a signal peptide directing secretion; sequence MMGKYLWALVYVTVMILIIVVEVES. One can recognise a Phytocyanin domain in the interval 26–126; sequence SLHRVGGGRY…GMKLAITVLP (101 aa). Residues asparagine 42, asparagine 63, asparagine 73, asparagine 88, and asparagine 135 are each glycosylated (N-linked (GlcNAc...) asparagine). Cysteine 80 and cysteine 114 are disulfide-bonded. The GPI-anchor amidated serine moiety is linked to residue serine 138. Residues 139-163 constitute a propeptide, removed in mature form; the sequence is TTTPLIPPNAITAAILIFAFKALLL.

It belongs to the early nodulin-like (ENODL) family.

The protein localises to the cell membrane. In terms of biological role, may act as a carbohydrate transporter. In Arabidopsis thaliana (Mouse-ear cress), this protein is Early nodulin-like protein 20.